The primary structure comprises 514 residues: Cytochrome P450 monooxygenase ptmQ (514 aa).

The chain crosses the membrane as a helical span at residues 3-23 (YVAQSPWIATLIVTATTYCTL). Asn148 carries N-linked (GlcNAc...) asparagine glycosylation. Residue Cys452 coordinates heme. A glycan (N-linked (GlcNAc...) asparagine) is linked at Asn486.

It belongs to the cytochrome P450 family. Heme serves as cofactor.

It is found in the membrane. It participates in secondary metabolite biosynthesis. In terms of biological role, cytochrome P450 monooxygenase; part of the gene cluster that mediates the biosynthesis of the indole diterpenes penitrems. The geranylgeranyl diphosphate (GGPP) synthase ptmG catalyzes the first step in penitrem biosynthesis via conversion of farnesyl pyrophosphate and isopentyl pyrophosphate into geranylgeranyl pyrophosphate (GGPP). Condensation of indole-3-glycerol phosphate with GGPP by the prenyl transferase ptmC then forms 3-geranylgeranylindole (3-GGI). Epoxidation by the FAD-dependent monooxygenase ptmM leads to a epoxidized-GGI that is substrate of the terpene cyclase ptmB for cyclization to yield paspaline. Paspaline is subsequently converted to 13-desoxypaxilline by the cytochrome P450 monooxygenase ptmP, the latter being then converted to paxilline by the cytochrome P450 monooxygenase ptmQ. Paxilline is converted to beta-paxitriol via C-10 ketoreduction by the short-chain dehydrogenase ptmH which can be monoprenylated at the C-20 by the indole diterpene prenyltransferase ptmD. A two-step elimination (acetylation and elimination) process performed by the O-acetyltransferase ptmV and ptmI leads to the production of the prenylated form of penijanthine. The FAD-linked oxidoreductase ptmO then converts the prenylated form of penijanthine into PC-M5 which is in turn transformed into PC-M4 by the aromatic dimethylallyltransferase ptmE. Five sequential oxidative transformations performed by the cytochrome P450 monooxygenases ptmK, ptmU, ptmL, ptmN and ptmJ yield the various penitrem compounds. PtmK, ptmU and ptmM are involved in the formation of the key bicyclic ring of penitrem C via the formation of the intermediates secopenitrem D and penitrem D. PtmL catalyzes the epoxidation of penitrem D and C to yield penitrem B and F, respectively. PtmJ catalyzes the last benzylic hydroxylation to convert penitrem B to prenitrem E and penitrem F to penitrem A. This chain is Cytochrome P450 monooxygenase ptmQ, found in Penicillium ochrochloron.